The primary structure comprises 510 residues: 2,3-bisphosphoglycerate-independent phosphoglycerate mutase (510 aa).

Mn(2+) is bound by residues aspartate 11 and serine 61. Serine 61 acts as the Phosphoserine intermediate in catalysis. Residues histidine 124, 154-155 (RD), arginine 185, arginine 191, 260-263 (RPDR), and lysine 333 contribute to the substrate site. Mn(2+) contacts are provided by aspartate 398, histidine 402, aspartate 439, histidine 440, and histidine 457.

This sequence belongs to the BPG-independent phosphoglycerate mutase family. As to quaternary structure, monomer. The cofactor is Mn(2+).

The catalysed reaction is (2R)-2-phosphoglycerate = (2R)-3-phosphoglycerate. Its pathway is carbohydrate degradation; glycolysis; pyruvate from D-glyceraldehyde 3-phosphate: step 3/5. Functionally, catalyzes the interconversion of 2-phosphoglycerate and 3-phosphoglycerate. The sequence is that of 2,3-bisphosphoglycerate-independent phosphoglycerate mutase from Mycoplasma mobile (strain ATCC 43663 / 163K / NCTC 11711) (Mesomycoplasma mobile).